Here is a 266-residue protein sequence, read N- to C-terminus: Hydroxyacylglutathione hydrolase (266 aa).

Positions 53, 55, 57, 58, 118, 140, and 178 each coordinate Zn(2+).

It belongs to the metallo-beta-lactamase superfamily. Glyoxalase II family. As to quaternary structure, monomer. Zn(2+) serves as cofactor.

The enzyme catalyses an S-(2-hydroxyacyl)glutathione + H2O = a 2-hydroxy carboxylate + glutathione + H(+). It functions in the pathway secondary metabolite metabolism; methylglyoxal degradation; (R)-lactate from methylglyoxal: step 2/2. Its function is as follows. Thiolesterase that catalyzes the hydrolysis of S-D-lactoyl-glutathione to form glutathione and D-lactic acid. This chain is Hydroxyacylglutathione hydrolase, found in Cupriavidus metallidurans (strain ATCC 43123 / DSM 2839 / NBRC 102507 / CH34) (Ralstonia metallidurans).